The primary structure comprises 310 residues: Probable manganese-dependent inorganic pyrophosphatase (310 aa).

His-9, Asp-13, Asp-15, Asp-75, His-97, and Asp-149 together coordinate Mn(2+).

The protein belongs to the PPase class C family. It depends on Mn(2+) as a cofactor.

Its subcellular location is the cytoplasm. The catalysed reaction is diphosphate + H2O = 2 phosphate + H(+). The polypeptide is Probable manganese-dependent inorganic pyrophosphatase (Brevibacillus brevis (strain 47 / JCM 6285 / NBRC 100599)).